The following is a 421-amino-acid chain: MTLAASSQRSQIIRSKFRSVLQLRIHRRNQDCTSDSDPWISASGPALAPALPTVPASFLVSPGVLSPEPAYCPWRAPKKESPKNSQHWKEPKVRGNLTYHLYMPPEQRQGPRANLQVERSTLGPPDPPLWEKNSQRPHPRMKPSSAGVSSPSPPSHKLELQTLKLEELTVSELRQQLRLRGLPVSGTKAMLLERMRGGTPPRERPKPRREDKEAAAPWPRLKPKALGTTRLPSTVKASATNRRLKFSGATDPLGAAPAPASVPAPTPSPALAPTPTPAPVPAPAPAPFPTPPASLTLEEELQEAIRRAQLLPNRNIDDILEDQVEPDDLLPPVPLDFPGSFDLLSPSPDSEGFSSVFSSSLPSPTSSLSPSPRALTDSLDWLEALSGGPPLGSGPPGPSIFSADLSDPSGSLLWELLPDPW.

Positions 12–28 (IIRSKFRSVLQLRIHRR) match the MEF2-binding motif. Disordered stretches follow at residues 104–156 (PPEQ…PPSH), 188–296 (KAML…ASLT), and 322–406 (DQVE…ADLS). The region spanning 165 to 199 (LEELTVSELRQQLRLRGLPVSGTKAMLLERMRGGT) is the SAP domain. A compositionally biased stretch (basic and acidic residues) spans 191–214 (LLERMRGGTPPRERPKPRREDKEA). The tract at residues 208–421 (RREDKEAAAP…LLWELLPDPW (214 aa)) is transcription activation. The span at 230–241 (RLPSTVKASATN) shows a compositional bias: polar residues. Residues 260–292 (ASVPAPTPSPALAPTPTPAPVPAPAPAPFPTPP) show a composition bias toward pro residues. Residues 347 to 372 (SPDSEGFSSVFSSSLPSPTSSLSPSP) show a composition bias toward low complexity.

Interacts with MEF2C. In terms of tissue distribution, expressed in skeletal muscle, brain, placenta and spleen.

It is found in the nucleus. Its function is as follows. Transcriptional coactivator. Stimulates the transcriptional activity of MEF2C. Stimulates MYOD1 activity in part via MEF2, resulting in an enhancement of skeletal muscle differentiation. The sequence is that of MEF2-activating motif and SAP domain-containing transcriptional regulator (Mamstr) from Mus musculus (Mouse).